An 86-amino-acid polypeptide reads, in one-letter code: RNA-binding protein Hfq (86 aa).

The Sm domain maps to 9 to 68 (DPYLNTLRKERVPVSIYLVNGIKLQGQIESFDQFVILLKNTVSQMVYKHAISTVVPSRPV). The tract at residues 66–86 (RPVRLPSAGDSEQADAEPGNA) is disordered.

It belongs to the Hfq family. In terms of assembly, homohexamer.

Its function is as follows. RNA chaperone that binds small regulatory RNA (sRNAs) and mRNAs to facilitate mRNA translational regulation in response to envelope stress, environmental stress and changes in metabolite concentrations. Also binds with high specificity to tRNAs. The chain is RNA-binding protein Hfq from Ectopseudomonas mendocina (strain ymp) (Pseudomonas mendocina).